Reading from the N-terminus, the 282-residue chain is MAPQRSQDKTPIQLLHEYGIKISSAPKYELIHADGDAHQPSFMFSVTIGEVTCKGRGSTKKAAKHEAAEAALKLLKRDSQIIDQRDNNGLSPEAGEASNPVGILQELAMQRVWCLPEYVVFMETGPGHMKEFTIACRLEGLEETGSGSSKKLARRAAAENMIAKLQSLSGSSEITWSPPSRVYVESLRNSTGEKVSLLKRTPLSLPNTDYIQMLLEISLELGFQVTYIDIDELTVNGQYQCLVELSTRPVTVCHGSGVTSSNAHNAAAHNALQYIKMVASKH.

DRBM domains lie at 10–77 (TPIQ…LLKR), 99–167 (NPVG…KLQS), and 209–277 (DYIQ…YIKM).

This sequence belongs to the PRKRA family. In terms of assembly, homodimer. Interacts with dicer1 and eif2ak2/pkr. Also able to interact with dsRNA.

It is found in the cytoplasm. It localises to the perinuclear region. Functionally, activates eif2ak2/pkr in the absence of double-stranded RNA (dsRNA), leading to phosphorylation of eif2s1/efi2-alpha and inhibition of translation and induction of apoptosis. Required for siRNA production by dicer1 and for subsequent siRNA-mediated post-transcriptional gene silencing. Does not seem to be required for processing of pre-miRNA to miRNA by dicer1. The protein is Interferon-inducible double-stranded RNA-dependent protein kinase activator A homolog (prkra) of Danio rerio (Zebrafish).